A 397-amino-acid chain; its full sequence is Acetate kinase (397 aa).

Asn-8 is a binding site for Mg(2+). Residue Lys-15 participates in ATP binding. Arg-89 contacts substrate. Asp-146 serves as the catalytic Proton donor/acceptor. ATP-binding positions include His-206 to Gly-210, Asp-281 to Arg-283, and Gly-329 to Asn-333. Glu-382 provides a ligand contact to Mg(2+).

It belongs to the acetokinase family. As to quaternary structure, homodimer. The cofactor is Mg(2+). It depends on Mn(2+) as a cofactor.

Its subcellular location is the cytoplasm. It carries out the reaction acetate + ATP = acetyl phosphate + ADP. It functions in the pathway metabolic intermediate biosynthesis; acetyl-CoA biosynthesis; acetyl-CoA from acetate: step 1/2. In terms of biological role, catalyzes the formation of acetyl phosphate from acetate and ATP. Can also catalyze the reverse reaction. The chain is Acetate kinase from Anoxybacillus flavithermus (strain DSM 21510 / WK1).